Reading from the N-terminus, the 1174-residue chain is Male determiner protein Mdmd(V) (1174 aa).

Positions 1-15 (MNATDAESRKPENKP) are enriched in basic and acidic residues. Disordered stretches follow at residues 1–51 (MNAT…SGQR), 79–110 (RKDG…PVEL), and 136–259 (KQLS…LRRS). A compositionally biased stretch (low complexity) spans 16–35 (SSESSSSGSTSGSSDGEVSS). Over residues 36 to 47 (KTYFKNNKSKVL) the composition is skewed to polar residues. Basic and acidic residues predominate over residues 79–92 (RKDGSNEMLPKEDS). Residues 93-102 (INTNHNYTTD) show a composition bias toward polar residues. Low complexity predominate over residues 138 to 153 (LSAYRSRSRSTRLSYS). Positions 167-180 (SRYKKSVLRSRRTS) are enriched in basic residues. A compositionally biased stretch (basic and acidic residues) spans 183–200 (HGRDSSTTKRSVSRDKDN). Positions 201 to 223 (RLRRRIGSSRSHTRSHSRFRRSE) are enriched in basic residues. Positions 235-259 (RSQERRHERRRSMSSDYERIALRRS) are enriched in basic and acidic residues. Residues 348-531 (KKYIHGYINK…KVLFQVRRDG (184 aa)) form the MIF4G domain. A compositionally biased stretch (low complexity) spans 597 to 608 (DSDGSFGSGSNS). The segment at 597-616 (DSDGSFGSGSNSETALSDCD) is disordered. In terms of domain architecture, MI spans 641-757 (ALRRTIYLTL…SWDVLDCIKL (117 aa)). Positions 840-857 (SAPSSSSSSSLSSELSAP) are enriched in low complexity. 2 disordered regions span residues 840 to 1045 (SAPS…SRTK) and 1095 to 1133 (RKDN…NHSR). Positions 869-909 (KKKHKGKNKKMTKKKNPSKKKEKTKKIVGKNKIAAKNKTIK) are enriched in basic residues. Basic and acidic residues predominate over residues 910 to 924 (RRTDKDNSSSKDNFL). A compositionally biased stretch (low complexity) spans 926-957 (SESSSNESISLDSLSSELFAPSSYSSSESSND). The segment covering 963–1001 (KHKGKNKKMTKKKNPSNKREKTKKKLSKNKKAPNKNTKK) has biased composition (basic residues). Positions 1010 to 1020 (SSESSISESKS) are enriched in low complexity. The segment covering 1034–1045 (RKKRVTSKSRTK) has biased composition (basic residues). The segment covering 1095-1118 (RKDNYGNRQNHEISQRHDSEIKRR) has biased composition (basic and acidic residues). Basic residues predominate over residues 1119-1130 (REERKKRHHEKN).

It belongs to the CWC22 family. Component of the spliceosome C complex.

The protein localises to the nucleus speckle. In terms of biological role, male determiner protein (M-factor) that controls male somatic sexual differentiation. Acts as a dominant factor that regulates the mRNA splicing of transformer (tra) and doublesex (dsx) transcripts and promotes expression of male splice forms of tra and dsx. Probably acts as a component of the spliceosome C complex required for mRNA splicing factor and exon-junction complex (EJC) assembly. Hinders eIF4AIII from non-specifically binding RNA and escorts it to the splicing machinery to promote EJC assembly on mature mRNAs. The sequence is that of Male determiner protein Mdmd(V) from Musca domestica (House fly).